The primary structure comprises 324 residues: Putative glycosyltransferase R655 (324 aa).

It belongs to the glycosyltransferase 25 family.

In Acanthamoeba polyphaga (Amoeba), this protein is Putative glycosyltransferase R655.